The chain runs to 430 residues: MPDKTEYLLAINCGSSSIKGKLFAIPSFELLANLAVTNISSADERVKIRITWEEGKGKNSEEEADYGDKIRYASLVPILLDHLTNSTHVEKEEIKYVCHRVVHGGTHDRGIRVVKGHEEGLIEMDKLSEFAPLHNHRAVLAVKSCLDALPHHTSLLLFDTIFHQTIAPEVYTYALPPSDNELSMPLRKYGFHGLSYASIVRSLAEHLKKPSDQVNVVVAHLGSGSSSCCIKNGKSVDTSMGLTPLEGLLGGTRSGTIDPTAIFHHTKDAASDANVGDFTVSKAEIILNKNSGLKALAGTTNFGHIIQNLDPSKCSKEDHEKAKLTYAVFLDRLLNFVAQYLFKLLSEVPIESIDGLVFSGGIGEKGAELRRDVLKKLAWLGAEVDEEANNSNSGGTVKCITKEGSKLKGWVVETDEEGWMATMAKEEFGF.

Asn12 serves as a coordination point for Mg(2+). Position 19 (Lys19) interacts with ATP. Position 100 (Arg100) interacts with substrate. Asp159 serves as the catalytic Proton donor/acceptor. Residue 220–224 (HLGSG) participates in ATP binding. Glu416 contacts Mg(2+).

The protein belongs to the acetokinase family. It depends on Mg(2+) as a cofactor.

The catalysed reaction is acetate + ATP = acetyl phosphate + ADP. It functions in the pathway metabolic intermediate biosynthesis; acetyl-CoA biosynthesis; acetyl-CoA from acetate: step 1/2. In Cryptococcus neoformans var. neoformans serotype D (strain B-3501A) (Filobasidiella neoformans), this protein is Probable acetate kinase.